Consider the following 400-residue polypeptide: Elongation factor Tu 1 (400 aa).

Positions 10 to 209 (KPHLNIGTIG…AVDSYIPLPQ (200 aa)) constitute a tr-type G domain. A G1 region spans residues 19–26 (GHIDHGKT). 19 to 26 (GHIDHGKT) is a GTP binding site. Position 26 (Thr26) interacts with Mg(2+). A G2 region spans residues 60 to 64 (GITIN). A G3 region spans residues 81 to 84 (DCPG). GTP is bound by residues 81–85 (DCPGH) and 136–139 (NKTD). A G4 region spans residues 136-139 (NKTD). The G5 stretch occupies residues 174 to 176 (SAL).

Belongs to the TRAFAC class translation factor GTPase superfamily. Classic translation factor GTPase family. EF-Tu/EF-1A subfamily. As to quaternary structure, monomer.

The protein resides in the cytoplasm. The enzyme catalyses GTP + H2O = GDP + phosphate + H(+). In terms of biological role, GTP hydrolase that promotes the GTP-dependent binding of aminoacyl-tRNA to the A-site of ribosomes during protein biosynthesis. The sequence is that of Elongation factor Tu 1 from Syntrophomonas wolfei subsp. wolfei (strain DSM 2245B / Goettingen).